The primary structure comprises 290 residues: Protease HtpX (290 aa).

The next 2 membrane-spanning stretches (helical) occupy residues 4-24 and 36-56; these read IMLF…TLKL and GSLL…SLFI. Histidine 142 is a Zn(2+) binding site. Residue glutamate 143 is part of the active site. Histidine 146 is a Zn(2+) binding site. A run of 2 helical transmembrane segments spans residues 150-170 and 193-213; these read GDMV…MFFA and FIAT…IVMW. Glutamate 219 is a Zn(2+) binding site.

Belongs to the peptidase M48B family. The cofactor is Zn(2+).

Its subcellular location is the cell inner membrane. The protein is Protease HtpX of Ectopseudomonas mendocina (strain ymp) (Pseudomonas mendocina).